Reading from the N-terminus, the 304-residue chain is Acetyl-coenzyme A carboxylase carboxyl transferase subunit beta (304 aa).

The CoA carboxyltransferase N-terminal domain occupies 23 to 292 (VWTKCDSCGQ…PNPDAPREGE (270 aa)). Positions 27, 30, 46, and 49 each coordinate Zn(2+). The C4-type zinc finger occupies 27–49 (CDSCGQVLYRAELERNLEVCPKC). Residues 281 to 304 (PAPNPDAPREGEVVPPVPDQEPEA) are disordered. Residues 295–304 (PPVPDQEPEA) show a composition bias toward pro residues.

This sequence belongs to the AccD/PCCB family. In terms of assembly, acetyl-CoA carboxylase is a heterohexamer composed of biotin carboxyl carrier protein (AccB), biotin carboxylase (AccC) and two subunits each of ACCase subunit alpha (AccA) and ACCase subunit beta (AccD). The cofactor is Zn(2+).

The protein localises to the cytoplasm. It catalyses the reaction N(6)-carboxybiotinyl-L-lysyl-[protein] + acetyl-CoA = N(6)-biotinyl-L-lysyl-[protein] + malonyl-CoA. Its pathway is lipid metabolism; malonyl-CoA biosynthesis; malonyl-CoA from acetyl-CoA: step 1/1. Its function is as follows. Component of the acetyl coenzyme A carboxylase (ACC) complex. Biotin carboxylase (BC) catalyzes the carboxylation of biotin on its carrier protein (BCCP) and then the CO(2) group is transferred by the transcarboxylase to acetyl-CoA to form malonyl-CoA. This is Acetyl-coenzyme A carboxylase carboxyl transferase subunit beta from Citrobacter koseri (strain ATCC BAA-895 / CDC 4225-83 / SGSC4696).